Consider the following 457-residue polypeptide: Proton extrusion protein PxcA (457 aa).

A run of 4 helical transmembrane segments spans residues 239–259, 332–352, 368–390, and 417–437; these read FILL…TFFL, INAI…GVVI, GILY…DMFV, and FNFL…KYWI.

Belongs to the CemA family.

Its subcellular location is the cell inner membrane. Required for H(+) efflux immediately after light irradiation to form a rapid H(+) concentration gradient across the thylakoid membranes. Together with PxcL, contributes to transient H(+) uptake following dark to light transition. The polypeptide is Proton extrusion protein PxcA (Gloeothece citriformis (strain PCC 7424) (Cyanothece sp. (strain PCC 7424))).